Here is a 177-residue protein sequence, read N- to C-terminus: Large ribosomal subunit protein uL6 (177 aa).

The span at Tyr157–Arg171 shows a compositional bias: basic and acidic residues. Residues Tyr157–Lys177 are disordered.

This sequence belongs to the universal ribosomal protein uL6 family. As to quaternary structure, part of the 50S ribosomal subunit.

In terms of biological role, this protein binds to the 23S rRNA, and is important in its secondary structure. It is located near the subunit interface in the base of the L7/L12 stalk, and near the tRNA binding site of the peptidyltransferase center. The sequence is that of Large ribosomal subunit protein uL6 from Pseudoalteromonas translucida (strain TAC 125).